A 394-amino-acid chain; its full sequence is Elongation factor Tu 1 (394 aa).

One can recognise a tr-type G domain in the interval 10-204 (KPHVNVGTIG…ALDSYIPEPE (195 aa)). A G1 region spans residues 19–26 (GHVDHGKT). 19–26 (GHVDHGKT) provides a ligand contact to GTP. T26 is a Mg(2+) binding site. The interval 60–64 (GITIN) is G2. Residues 81-84 (DCPG) form a G3 region. GTP contacts are provided by residues 81-85 (DCPGH) and 136-139 (NKCD). A G4 region spans residues 136–139 (NKCD). The segment at 174–176 (SAL) is G5.

It belongs to the TRAFAC class translation factor GTPase superfamily. Classic translation factor GTPase family. EF-Tu/EF-1A subfamily. As to quaternary structure, monomer.

It is found in the cytoplasm. It carries out the reaction GTP + H2O = GDP + phosphate + H(+). GTP hydrolase that promotes the GTP-dependent binding of aminoacyl-tRNA to the A-site of ribosomes during protein biosynthesis. This is Elongation factor Tu 1 from Shewanella sp. (strain MR-4).